We begin with the raw amino-acid sequence, 141 residues long: Transcription antitermination protein NusB (141 aa).

Belongs to the NusB family.

Involved in transcription antitermination. Required for transcription of ribosomal RNA (rRNA) genes. Binds specifically to the boxA antiterminator sequence of the ribosomal RNA (rrn) operons. The polypeptide is Transcription antitermination protein NusB (Neisseria meningitidis serogroup C (strain 053442)).